A 684-amino-acid chain; its full sequence is Pescadillo homolog (684 aa).

The segment at 284–352 (DAAAAEASSN…DSDEEADDEA (69 aa)) is disordered. Residues 285–294 (AAAAEASSNA) are compositionally biased toward low complexity. Residues 296 to 310 (TRKDGKKLSTRDVKR) are compositionally biased toward basic and acidic residues. The span at 342–352 (QDSDEEADDEA) shows a compositional bias: acidic residues. The BRCT domain maps to 387 to 486 (PLPMLFSRYV…QILPTDPYRP (100 aa)). 2 disordered regions span residues 508-580 (GYVP…ALLA) and 612-684 (AASL…NKKP). The segment covering 528–543 (ADEDEDEDEDEDEDED) has biased composition (acidic residues). The segment covering 544 to 570 (KAGSGRGDDKNVAAREQDAVEKHDKTP) has biased composition (basic and acidic residues). Over residues 612-624 (AASLKSHKKKKRT) the composition is skewed to basic residues. Positions 663–675 (KKKEEKMRLEAKK) are enriched in basic and acidic residues.

This sequence belongs to the pescadillo family. In terms of assembly, component of the NOP7 complex, composed of ERB1, NOP7 and YTM1. The complex is held together by ERB1, which interacts with NOP7 via its N-terminal domain and with YTM1 via a high-affinity interaction between the seven-bladed beta-propeller domains of the 2 proteins. The NOP7 complex associates with the 66S pre-ribosome.

The protein resides in the nucleus. Its subcellular location is the nucleolus. The protein localises to the nucleoplasm. Functionally, component of the NOP7 complex, which is required for maturation of the 25S and 5.8S ribosomal RNAs and formation of the 60S ribosome. This chain is Pescadillo homolog, found in Malassezia globosa (strain ATCC MYA-4612 / CBS 7966) (Dandruff-associated fungus).